The primary structure comprises 27 residues: Potassium channel toxin alpha-KTx 9.11 (27 aa).

Disulfide bonds link C3–C19, C6–C23, and C10–C25.

Belongs to the short scorpion toxin superfamily. Potassium channel inhibitor family. Alpha-KTx 09 subfamily. In terms of tissue distribution, expressed by the venom gland.

It localises to the secreted. May play a role in blocking voltage-gated potassium channels Kv1.2/KCNA2, Kv1.3/KCNA3 and Kv1.6/KCNA6 to a lesser extent. This Mesobuthus gibbosus (Mediterranean checkered scorpion) protein is Potassium channel toxin alpha-KTx 9.11.